A 266-amino-acid polypeptide reads, in one-letter code: UPF0294 protein Ent638_0743 (266 aa).

This sequence belongs to the UPF0294 family.

The protein resides in the cytoplasm. This Enterobacter sp. (strain 638) protein is UPF0294 protein Ent638_0743.